Here is a 276-residue protein sequence, read N- to C-terminus: Probable doxorubicin resistance ABC transporter permease protein DrrC (276 aa).

Helical transmembrane passes span 46 to 66 (ITVIGAIVLPILFMVVLNIVL), 82 to 102 (IVPLIALGAAITGSTFVAIDL), 129 to 149 (ILANAIRTLVTTLVMLGTGVV), 159 to 179 (IPSLMWISVPVILGIAIAAMV), 190 to 210 (VVVEGVELVQAIAIFFSTGLV), and 248 to 268 (MIGMLVWTAGICVVCAVPLAI). Residues 46–273 (ITVIGAIVLP…VPLAIGYRRA (228 aa)) form the ABC transmembrane type-2 domain.

The protein belongs to the ABC-2 integral membrane protein family. As to quaternary structure, the complex is composed of two ATP-binding proteins (DrrA) and two transmembrane proteins (DrrB and DrrC).

It is found in the cell membrane. In terms of biological role, probably part of the ABC transporter complex DrrABC involved in doxorubicin resistance. Probably responsible for the translocation of the substrate across the membrane. In Mycobacterium tuberculosis (strain CDC 1551 / Oshkosh), this protein is Probable doxorubicin resistance ABC transporter permease protein DrrC (drrC).